The chain runs to 237 residues: Protein GrpE (237 aa).

Disordered stretches follow at residues Met1 to Gln52 and Lys200 to Val237. Polar residues predominate over residues Ala27–Ser40. Over residues Gly204 to Ser218 the composition is skewed to low complexity.

The protein belongs to the GrpE family. As to quaternary structure, homodimer.

It is found in the cytoplasm. In terms of biological role, participates actively in the response to hyperosmotic and heat shock by preventing the aggregation of stress-denatured proteins, in association with DnaK and GrpE. It is the nucleotide exchange factor for DnaK and may function as a thermosensor. Unfolded proteins bind initially to DnaJ; upon interaction with the DnaJ-bound protein, DnaK hydrolyzes its bound ATP, resulting in the formation of a stable complex. GrpE releases ADP from DnaK; ATP binding to DnaK triggers the release of the substrate protein, thus completing the reaction cycle. Several rounds of ATP-dependent interactions between DnaJ, DnaK and GrpE are required for fully efficient folding. The sequence is that of Protein GrpE from Prochlorococcus marinus (strain MIT 9303).